Consider the following 842-residue polypeptide: Cation/H(+) antiporter 20 (842 aa).

The next 12 membrane-spanning stretches (helical) occupy residues 26-46, 55-75, 86-106, 122-142, 155-175, 193-213, 228-248, 283-303, 320-340, 353-373, 380-400, and 413-433; these read FPLL…LAVL, VIAE…RNMA, MPIL…LVGL, GIAV…AFVI, YAEF…PVLA, MAAA…AVAL, LVSL…LVVI, FATD…GLTI, FVSG…TDVA, LVVV…AVMV, ALTL…VLNI, and AILV…VMAI. Basic and acidic residues predominate over residues 585–595; the sequence is DHGHSHHHQDG. The interval 585–605 is disordered; sequence DHGHSHHHQDGGGDGNVPENV.

Belongs to the monovalent cation:proton antiporter 2 (CPA2) transporter (TC 2.A.37) family. CHX (TC 2.A.37.4) subfamily. Expressed in leaves and stems. Preferentially expressed in guards cells.

It localises to the endomembrane system. Functionally, operates as a K(+)/H(+) antiporter that maintains K(+) homeostasis in guard cells and could regulate pH. Plays a critical role in osmoregulation through the control of stomates opening. The polypeptide is Cation/H(+) antiporter 20 (CHX20) (Arabidopsis thaliana (Mouse-ear cress)).